We begin with the raw amino-acid sequence, 221 residues long: High frequency lysogenization protein HflD homolog (221 aa).

Belongs to the HflD family.

The protein localises to the cytoplasm. It localises to the cell inner membrane. The polypeptide is High frequency lysogenization protein HflD homolog (Acidithiobacillus ferrooxidans (strain ATCC 23270 / DSM 14882 / CIP 104768 / NCIMB 8455) (Ferrobacillus ferrooxidans (strain ATCC 23270))).